The following is a 212-amino-acid chain: Large ribosomal subunit protein uL1 (212 aa).

Belongs to the universal ribosomal protein uL1 family. Part of the 50S ribosomal subunit.

Functionally, binds directly to 23S rRNA. Probably involved in E site tRNA release. In terms of biological role, protein L1 is also a translational repressor protein, it controls the translation of its operon by binding to its mRNA. This is Large ribosomal subunit protein uL1 from Methanosphaera stadtmanae (strain ATCC 43021 / DSM 3091 / JCM 11832 / MCB-3).